The primary structure comprises 313 residues: Sorting nexin-20 (313 aa).

The disordered stretch occupies residues 1–61; it reads MASPQHPGGP…MTTRELQEHW (61 aa). A Phosphoserine modification is found at serine 3. Residues 29–38 are compositionally biased toward pro residues; that stretch reads PPGPDLPCPG. Positions 45 to 55 are enriched in polar residues; it reads GPTSNSNMTTR. Residues 71-188 form the PX domain; sequence VRLLFEIASA…DFLTRPELCE (118 aa). Residues arginine 113, serine 115, lysine 140, and arginine 154 each contribute to the a 1,2-diacyl-sn-glycero-3-phospho-(1D-myo-inositol-3-phosphate) site.

It belongs to the sorting nexin family. In terms of assembly, interacts with SELPLG. Interaction with SELPLG is controversial.

It is found in the early endosome membrane. The protein resides in the cell membrane. Its subcellular location is the cytoplasm. It localises to the nucleus. Its function is as follows. May play a role in cellular vesicle trafficking. Has been proposed to function as a sorting protein that targets SELPLG into endosomes, but has no effect on SELPLG internalization from the cell surface, or on SELPLG-mediated cell-cell adhesion. The sequence is that of Sorting nexin-20 (Snx20) from Rattus norvegicus (Rat).